A 560-amino-acid chain; its full sequence is 5'-nucleotidase (560 aa).

An N-terminal signal peptide occupies residues 1-21; that stretch reads MNQRLIIKTALSAAILASLAG. A lipid anchor (N-palmitoyl cysteine) is attached at C22. The S-diacylglycerol cysteine moiety is linked to residue C22. Residues D45, H47, D88, N120, H221, H256, and Q258 each contribute to the a divalent metal cation site. Residues F432 and 501-507 contribute to the substrate site; that span reads YNASGGD.

This sequence belongs to the 5'-nucleotidase family. Requires chloride as cofactor. Mg(2+) serves as cofactor.

The protein resides in the cell outer membrane. The enzyme catalyses a ribonucleoside 5'-phosphate + H2O = a ribonucleoside + phosphate. Its function is as follows. Degradation of extracellular 5'-nucleotides for nutritional needs. This is 5'-nucleotidase (nutA) from Vibrio parahaemolyticus serotype O3:K6 (strain RIMD 2210633).